A 349-amino-acid chain; its full sequence is Ureidoglycolate dehydrogenase (NAD(+)) (349 aa).

The Proton acceptor role is filled by histidine 116. NAD(+)-binding positions include serine 140, 174 to 176 (DMA), lysine 224, and 306 to 308 (GQD).

This sequence belongs to the LDH2/MDH2 oxidoreductase family. In terms of assembly, homodimer.

Its subcellular location is the cytoplasm. The enzyme catalyses (S)-ureidoglycolate + NAD(+) = N-carbamoyl-2-oxoglycine + NADH + H(+). Its pathway is nitrogen metabolism; (S)-allantoin degradation; oxalurate from (S)-ureidoglycolate: step 1/1. Its function is as follows. AllD plays a pivotal role as a metabolic branch-point enzyme in nitrogen utilization via the assimilation of allantoin. It is able to utilize allantoin as a sole source of nitrogen under anaerobic conditions. Catalyzes the oxidation of ureidoglycolate to oxalurate. This chain is Ureidoglycolate dehydrogenase (NAD(+)), found in Escherichia coli (strain K12).